The following is a 111-amino-acid chain: Cell division protein FtsB (111 aa).

Residues 1-3 are Cytoplasmic-facing; sequence MRL. Residues 4–21 form a helical membrane-spanning segment; it reads LFLVLLVLLGLIQYPLWL. At 22–111 the chain is on the periplasmic side; it reads GKGGWFKVWD…PGQTASAPRR (90 aa). A coiled-coil region spans residues 31–62; sequence DLQRQVAAQHETNDGLRARNAALEAEVRDLAT. Positions 88–111 are disordered; that stretch reads VPPGTPVPQPAPGAPGQTASAPRR. Over residues 90–100 the composition is skewed to pro residues; the sequence is PGTPVPQPAPG. Low complexity predominate over residues 101 to 111; sequence APGQTASAPRR.

Belongs to the FtsB family. Part of a complex composed of FtsB, FtsL and FtsQ.

The protein resides in the cell inner membrane. Essential cell division protein. May link together the upstream cell division proteins, which are predominantly cytoplasmic, with the downstream cell division proteins, which are predominantly periplasmic. The sequence is that of Cell division protein FtsB from Bordetella petrii (strain ATCC BAA-461 / DSM 12804 / CCUG 43448).